Reading from the N-terminus, the 321-residue chain is MNMMRTAMLLAFMTALFMGVGFLIGGKGGMMIALLIAAGMNLFSYWNSDKMVLSAYRAREIDEANAPEFFHMIRDLSQNAGLPMPKVYIYDSPQPNAFATGRNPENAAVAASTGLLERLTPEEVAGVMAHELAHVQNRDTLTMTITATLAGAISMLGNFAFFFGGNRENNNNPLGFIGVLVAMIVAPLAAMLVQMAISRTREYSADRRGAEICGNPLWLASALQKISGMAQQIHNDDAERNPATAHMFIINPLSGERMDNLFSTHPNTENRVAALHAMAQEFSPRASTPPPSGDRPVRKSGSVPTTGWRRGNENERKGPWS.

Transmembrane regions (helical) follow at residues T6 to G26 and G28 to S48. H130 contacts Zn(2+). E131 is a catalytic residue. H134 contributes to the Zn(2+) binding site. 2 helical membrane-spanning segments follow: residues I145–G165 and P173–V193. Zn(2+) is bound at residue E202. The segment at E281–S321 is disordered. Positions R310–S321 are enriched in basic and acidic residues.

It belongs to the peptidase M48B family. Zn(2+) serves as cofactor.

Its subcellular location is the cell inner membrane. This is Protease HtpX homolog from Agrobacterium fabrum (strain C58 / ATCC 33970) (Agrobacterium tumefaciens (strain C58)).